We begin with the raw amino-acid sequence, 288 residues long: Glucose-1-phosphate thymidylyltransferase (288 aa).

Residues aspartate 108 and aspartate 223 each contribute to the Mg(2+) site.

The protein belongs to the glucose-1-phosphate thymidylyltransferase family. Homotetramer. Mg(2+) serves as cofactor.

It carries out the reaction dTTP + alpha-D-glucose 1-phosphate + H(+) = dTDP-alpha-D-glucose + diphosphate. In terms of biological role, catalyzes the formation of dTDP-glucose, from dTTP and glucose 1-phosphate, as well as its pyrophosphorolysis. The chain is Glucose-1-phosphate thymidylyltransferase (rmlA1) from Neisseria meningitidis serogroup A / serotype 4A (strain DSM 15465 / Z2491).